Consider the following 227-residue polypeptide: Probable septum site-determining protein MinC (227 aa).

It belongs to the MinC family. In terms of assembly, interacts with MinD and FtsZ.

In terms of biological role, cell division inhibitor that blocks the formation of polar Z ring septums. Rapidly oscillates between the poles of the cell to destabilize FtsZ filaments that have formed before they mature into polar Z rings. Prevents FtsZ polymerization. The chain is Probable septum site-determining protein MinC from Shouchella clausii (strain KSM-K16) (Alkalihalobacillus clausii).